The chain runs to 637 residues: Acyl-CoA ligase cm3C (637 aa).

ATP-binding positions include 282-290 (TSGTSGRQK), 423-428 (HAWGLT), D507, R526, and K624. The tract at residues 353–423 (DMQRMLGSVA…SLQPSWEFLH (71 aa)) is SBD1. The interval 424-486 (AWGLTETCIV…YKAPNMFVGY (63 aa)) is SBD2.

This sequence belongs to the ATP-dependent AMP-binding enzyme family.

Its pathway is secondary metabolite biosynthesis. Its function is as follows. Acyl-CoA ligase; part of the gene cluster that mediates the biosynthesis of beauveriolides I and III, cyclodepsipeptides acting as inhibitors of the acyl-CoA:cholesterol acyltransferase. The HR-PKS cm3B initiates the biosynthesis of beauveriolides by iteratively catalyzing the formation of the linear polyketide chain. The ATP-dependent acetyl-CoA ligase cm3D converts the polyketide carboxylic acid to a CoA thioester which id shuttled to the first T domain in the NRPS cm3A by the acetyltransferase cm3C. Cm3A contains 13 domains and assembles the polyketide chain, L-phenylalanine, L-alanine, and D-leucine (or D-allo-isoleucine) to form beauveriolide I (or beauveriolide III). The production of both beauveriolides I and III suggests the substrate adaptability of cm3B, using different amino acids as substrates. This Cordyceps militaris (strain CM01) (Caterpillar fungus) protein is Acyl-CoA ligase cm3C.